Here is a 620-residue protein sequence, read N- to C-terminus: DNA primase (620 aa).

The CHC2-type zinc finger occupies 38-62; that stretch reads CPFHADQNPSMTVSVAKNIFKCFSC. The Toprim domain occupies 266–350; that stretch reads LKLYLVEGYF…IVEVVDWNQA (85 aa). Mg(2+) contacts are provided by E272, D319, and D321.

The protein belongs to the DnaG primase family. In terms of assembly, monomer. Interacts with DnaB. Zn(2+) is required as a cofactor. It depends on Mg(2+) as a cofactor.

The catalysed reaction is ssDNA + n NTP = ssDNA/pppN(pN)n-1 hybrid + (n-1) diphosphate.. Functionally, RNA polymerase that catalyzes the synthesis of short RNA molecules used as primers for DNA polymerase during DNA replication. This Mycoplasma pneumoniae (strain ATCC 29342 / M129 / Subtype 1) (Mycoplasmoides pneumoniae) protein is DNA primase.